Reading from the N-terminus, the 363-residue chain is NAD(P)H-quinone oxidoreductase subunit 1, chloroplastic (363 aa).

The next 9 membrane-spanning stretches (helical) occupy residues 30–50 (LVPI…IVWL), 98–118 (FSIG…VIPF), 129–149 (IGVF…LMSG), 165–185 (AAQS…ISLL), 203–223 (LWGW…ISSL), 248–268 (YSGI…LVSS), 269–289 (LFVT…IFVP), 300–320 (VFGT…FLFI), and 334–354 (DQLL…NLLL).

It belongs to the complex I subunit 1 family. In terms of assembly, NDH is composed of at least 16 different subunits, 5 of which are encoded in the nucleus.

It is found in the plastid. The protein localises to the chloroplast thylakoid membrane. The enzyme catalyses a plastoquinone + NADH + (n+1) H(+)(in) = a plastoquinol + NAD(+) + n H(+)(out). It carries out the reaction a plastoquinone + NADPH + (n+1) H(+)(in) = a plastoquinol + NADP(+) + n H(+)(out). In terms of biological role, NDH shuttles electrons from NAD(P)H:plastoquinone, via FMN and iron-sulfur (Fe-S) centers, to quinones in the photosynthetic chain and possibly in a chloroplast respiratory chain. The immediate electron acceptor for the enzyme in this species is believed to be plastoquinone. Couples the redox reaction to proton translocation, and thus conserves the redox energy in a proton gradient. This is NAD(P)H-quinone oxidoreductase subunit 1, chloroplastic from Oenothera elata subsp. hookeri (Hooker's evening primrose).